The sequence spans 511 residues: LEM domain-containing protein 2 (511 aa).

At Ala-2 the chain carries N-acetylalanine. Positions 2-42 constitute an LEM domain; it reads AGLSDLELRRELQALGFQPGPITDTTRNVYRNKLRRLRGEA. 2 disordered regions span residues 18–110 and 128–206; these read FQPG…SDAS and GLSY…AGRT. Residues 38–80 are compositionally biased toward basic and acidic residues; that stretch reads LRGEARLRDDERLREDAGPREDAGPRGPERQREEARLREEAPL. The segment at 80 to 112 is interaction with lamin A/C complexes; sequence LRARPAASVLRSEPWPLSPSPPAPSAASDASGP. The tract at residues 80–141 is required for nuclear retention and interaction with LMNA isoform C; sequence LRARPAASVL…PPHAGPGPLR (62 aa). Composition is skewed to low complexity over residues 81 to 94 and 172 to 183; these read RARPAASVLRSEPW and APPSASARPHSA. The next 2 membrane-spanning stretches (helical) occupy residues 221–241 and 385–405; these read LLLWASLGLLLGFLAILWVKM and VTHVLIFFWCLAFLWGLLILL. The winged-Helix (WH) stretch occupies residues 403-511; the sequence is ILLKYRWRKL…KPSSFSDSER (109 aa). Phosphoserine is present on residues Ser-505, Ser-507, and Ser-509.

Interacts (via N-terminus) with LMNA isoform C (via C-terminus) (in vitro). Interacts (via LEM domain) with BANF1. Interacts (via C-terminus) with CHMP7. Interacts (via N-terminus) with tubulin; the interaction causes microtubule bundling and stabilization (in vitro). In terms of processing, phosphorylated; strongly phosphorylated in mitosis compared to G1/S. Ubiquitously expressed, including liver, brain, heart, skeletal muscle, lung, testis, spleen, kidney and white adipose tissue.

Its subcellular location is the nucleus inner membrane. It is found in the nucleus envelope. It localises to the cytoplasm. The protein localises to the cytoskeleton. The protein resides in the spindle. Functionally, nuclear lamina-associated inner nuclear membrane protein that is involved in nuclear structure organization and maintenance of nuclear envelope (NE) integrity and NE reformation after mitosis. Plays a role as transmembrane adapter for the endosomal sorting complexes required for transport (ESCRT), and is thereby involved in ESCRT-mediated NE reformation. Promotes ESCRT-mediated NE closure by recruiting CHMP7 and downstream ESCRT-III proteins IST1/CHMP8 and CHMP2A to the reforming NE during anaphase. During nuclear reassembly, condenses into a liquid-like coating around microtubule spindles and coassembles with CHMP7 to form a macromolecular O-ring seal at the confluence between membranes, chromatin, and the spindle to facilitate early nuclear sealing. Plays a role in the organization of heterochromatin associated with the NE and in the maintenance of NE organization under mechanical stress. Required for embryonic development and is involved in regulation of several signaling pathways such as MAPK and AKT. Required for myoblast differentiation involving regulation of ERK signaling. Essential for cardiac homeostasis and proper heart function. In Mus musculus (Mouse), this protein is LEM domain-containing protein 2 (Lemd2).